Here is a 42-residue protein sequence, read N- to C-terminus: Photosystem I reaction center subunit IX (42 aa).

Residues 7-27 (YLSAAPVLSTLWLGALAGLLI) form a helical membrane-spanning segment.

The protein belongs to the PsaJ family.

The protein resides in the plastid membrane. May help in the organization of the PsaE and PsaF subunits. The protein is Photosystem I reaction center subunit IX of Cuscuta exaltata (Tall dodder).